The following is a 113-amino-acid chain: Large ribosomal subunit protein uL22 (113 aa).

It belongs to the universal ribosomal protein uL22 family. As to quaternary structure, part of the 50S ribosomal subunit.

This protein binds specifically to 23S rRNA; its binding is stimulated by other ribosomal proteins, e.g. L4, L17, and L20. It is important during the early stages of 50S assembly. It makes multiple contacts with different domains of the 23S rRNA in the assembled 50S subunit and ribosome. Functionally, the globular domain of the protein is located near the polypeptide exit tunnel on the outside of the subunit, while an extended beta-hairpin is found that lines the wall of the exit tunnel in the center of the 70S ribosome. The polypeptide is Large ribosomal subunit protein uL22 (Neorickettsia sennetsu (strain ATCC VR-367 / Miyayama) (Ehrlichia sennetsu)).